Reading from the N-terminus, the 207-residue chain is Basic helix-loop-helix transcription factor scleraxis (207 aa).

Disordered regions lie at residues 1-91 and 151-183; these read MSFA…RDRT and AFFHSGRAGSPLPPPPPPPPLARDGGENTQPKQ. Positions 73–91 are enriched in basic and acidic residues; that stretch reads PGREPRQRHTANARERDRT. One can recognise a bHLH domain in the interval 78–130; it reads RQRHTANARERDRTNSVNTAFTALRTLIPTEPADRKLSKIETLRLASSYISHL. Over residues 161–171 the composition is skewed to pro residues; sequence PLPPPPPPPPL.

As to quaternary structure, efficient DNA binding requires dimerization with another bHLH protein. Dimerizes and binds the E-box consensus sequence with E12. As to expression, expressed in mesenchymal precursors of cartilage and in connective tissue. Highly expressed in tendons in the limb, tongue and diaphragm and in cartilage of the bronchi.

The protein resides in the nucleus. Plays an early essential role in mesoderm formation, as well as a later role in formation of somite-derived chondrogenic lineages. The chain is Basic helix-loop-helix transcription factor scleraxis (Scx) from Mus musculus (Mouse).